An 842-amino-acid polypeptide reads, in one-letter code: Ionotropic receptor 21a (842 aa).

An N-terminal signal peptide occupies residues 1-15 (MSYYWVALVLFTAQA). Residue Asn-325 is glycosylated (N-linked (GlcNAc...) asparagine). The next 2 membrane-spanning stretches (helical) occupy residues 405 to 425 (WPVW…IVFT) and 437 to 457 (WGEV…AFSF). N-linked (GlcNAc...) asparagine glycosylation is present at Asn-469. The helical transmembrane segment at 479 to 499 (WLFTIIITSCYTGSIIAFVTL) threads the bilayer. 4 N-linked (GlcNAc...) asparagine glycosylation sites follow: Asn-533, Asn-558, Asn-583, and Asn-588. Residues 680–700 (MFLLMALGYFLGATALVSEIV) traverse the membrane as a helical segment. Residues 722–745 (WSSASSGSMLRTNAEQLSHDKRKA) form a disordered region. N-linked (GlcNAc...) asparagine glycans are attached at residues Asn-765 and Asn-797.

Belongs to the glutamate-gated ion channel (TC 1.A.10.1) family. As to expression, expressed in the dorsal organ cool cells. In the antenna, expressed in approximately six neurons in the arista as well as five to ten neurons near the third chamber of the sacculus.

It is found in the cell membrane. Integral part of a neural sensory system in the antenna that provides the neural basis for the response to environmental changes in temperature (thermosensation). Together with Ir25a and Ir93a, mediates the response of the dorsal organ cool cells, a trio of cool-responsive neurons, to cooling and is required for cool avoidance behavior. This is Ionotropic receptor 21a from Drosophila melanogaster (Fruit fly).